Consider the following 55-residue polypeptide: A-type ATP synthase subunit G (55 aa).

In terms of assembly, has multiple subunits, A(3), B(3), C, D, E, F, G, I and K(x); there may be a few other subunits as well.

The protein localises to the cell membrane. Component of the A-type ATP synthase that produces ATP from ADP in the presence of a proton gradient across the membrane. The polypeptide is A-type ATP synthase subunit G (atpG) (Methanosarcina mazei (strain ATCC BAA-159 / DSM 3647 / Goe1 / Go1 / JCM 11833 / OCM 88) (Methanosarcina frisia)).